A 377-amino-acid polypeptide reads, in one-letter code: Protein RecA (377 aa).

82 to 89 (GPESSGKT) provides a ligand contact to ATP. The tract at residues 345-377 (EGSEVSANSMRPLASAARQASSRPNLSQVSANG) is disordered. The span at 362–377 (RQASSRPNLSQVSANG) shows a compositional bias: polar residues.

Belongs to the RecA family.

The protein resides in the cytoplasm. Its function is as follows. Can catalyze the hydrolysis of ATP in the presence of single-stranded DNA, the ATP-dependent uptake of single-stranded DNA by duplex DNA, and the ATP-dependent hybridization of homologous single-stranded DNAs. It interacts with LexA causing its activation and leading to its autocatalytic cleavage. This is Protein RecA from Prochlorococcus marinus (strain NATL2A).